The chain runs to 423 residues: Ferrochelatase, mitochondrial (423 aa).

The N-terminal 40 residues, M1–M40, are a transit peptide targeting the mitochondrion. C200 serves as a coordination point for [2Fe-2S] cluster. Residue D385 is part of the active site. C405, C408, and C413 together coordinate [2Fe-2S] cluster.

The protein belongs to the ferrochelatase family. As to quaternary structure, monomer. Requires [2Fe-2S] cluster as cofactor.

The protein resides in the mitochondrion inner membrane. It localises to the cytoplasm. The protein localises to the nucleus. The catalysed reaction is heme b + 2 H(+) = protoporphyrin IX + Fe(2+). The protein operates within porphyrin-containing compound metabolism; protoheme biosynthesis; protoheme from protoporphyrin-IX: step 1/1. In terms of biological role, catalyzes the ferrous insertion into protoporphyrin IX. The protein is Ferrochelatase, mitochondrial (hem15) of Schizosaccharomyces pombe (strain 972 / ATCC 24843) (Fission yeast).